The following is a 199-amino-acid chain: Ras-related and estrogen-regulated growth inhibitor (199 aa).

Residues 13–20 (GRAGVGKS), 60–64 (DTAGQ), and 118–121 (NKAD) contribute to the GTP site.

Belongs to the small GTPase superfamily. Ras family. In terms of tissue distribution, detected in heart, brain, placenta, lung, liver, skin, kidney and pancreas. Detected in estrogen receptor-positive breast-derived cell lines, but not in estrogen receptor-negative cell lines. Expression is decreased or lost in a significant proportion of primary breast tumors with poor clinical prognosis.

It localises to the cytoplasm. It carries out the reaction GTP + H2O = GDP + phosphate + H(+). Its function is as follows. Binds GDP/GTP and possesses intrinsic GTPase activity. Has higher affinity for GDP than for GTP. In cell lines overexpression leads to a reduction in the rate of proliferation, colony formation and in tumorigenic potential. In Homo sapiens (Human), this protein is Ras-related and estrogen-regulated growth inhibitor (RERG).